A 161-amino-acid polypeptide reads, in one-letter code: S-ribosylhomocysteine lyase (161 aa).

Fe cation contacts are provided by His-57, His-61, and Cys-127.

Belongs to the LuxS family. As to quaternary structure, homodimer. Fe cation is required as a cofactor.

It catalyses the reaction S-(5-deoxy-D-ribos-5-yl)-L-homocysteine = (S)-4,5-dihydroxypentane-2,3-dione + L-homocysteine. Involved in the synthesis of autoinducer 2 (AI-2) which is secreted by bacteria and is used to communicate both the cell density and the metabolic potential of the environment. The regulation of gene expression in response to changes in cell density is called quorum sensing. Catalyzes the transformation of S-ribosylhomocysteine (RHC) to homocysteine (HC) and 4,5-dihydroxy-2,3-pentadione (DPD). In Streptococcus equi subsp. zooepidemicus (strain H70), this protein is S-ribosylhomocysteine lyase.